A 144-amino-acid polypeptide reads, in one-letter code: Prefoldin subunit alpha (144 aa).

It belongs to the prefoldin subunit alpha family. As to quaternary structure, heterohexamer of two alpha and four beta subunits.

Its subcellular location is the cytoplasm. Functionally, molecular chaperone capable of stabilizing a range of proteins. Seems to fulfill an ATP-independent, HSP70-like function in archaeal de novo protein folding. The protein is Prefoldin subunit alpha of Methanococcus maripaludis (strain DSM 14266 / JCM 13030 / NBRC 101832 / S2 / LL).